We begin with the raw amino-acid sequence, 664 residues long: MAPKSCQESEDKQVSPAPAGVQPDSSDLGSPVGTPVDRVAPSYSQSAKLYTSTPMGCSVKQQLAPETLDPRTLRLLWEQRELEIQALRWAVQNGHNARYSSILQEVAGVPSERNSKSQDKFLRNQVQKLTLELKAQKEQAQQEKQQLEEKLQQNLWAKQQLEAELQTFQKSCLLQLARSSWVGRVLRSQTGSVEVVTTEVLRDPSDFSESAEIPTSGEGFPLEDVDWNSIAQRYPNLFSNLNFYSDQKQSQPPTSETYTLDSEGATKHTEKPTKILEWSALPLLDTSSSERTQSDTSSCPIALHSGAKKTTGHPSQGTNLASSEQMQEHTRSFSGYTEDLCKSHSPSCSKTVLESYTDLHHPYTRPQLNPFGCCLKIAAVSHREKFIRVINQSQAETIDLGGFVLQQLVRDFPVCMYRFPPGTLLAPQHHITVWGEGTSRTKKQLPVASGQDPFQFQSSRGCVTVLVNPQGQVLSEHQATPCVTLGSKIFTDNTDWSIDCFPLSESEPDVHPGEQQCRPSSPQKGRAKDAGARRKKPGPGVRQHRHSSTSGLRASRTLHPTETRDILPLLSSRKLLPSGEVLTQQEGVKAETSELLPVIPECPSRLCLGEDSLGRQEYKVQVCRKSVDLSCPMVALSVQNTAESRYGFRFLCYPPITEELCRRL.

Positions 1–40 are disordered; that stretch reads MAPKSCQESEDKQVSPAPAGVQPDSSDLGSPVGTPVDRVA. Residues 118-169 adopt a coiled-coil conformation; it reads QDKFLRNQVQKLTLELKAQKEQAQQEKQQLEEKLQQNLWAKQQLEAELQTFQ. Polar residues predominate over residues 245–260; it reads SDQKQSQPPTSETYTL. 2 disordered regions span residues 245 to 272 and 286 to 329; these read SDQK…TEKP and TSSS…MQEH. Residues 286 to 298 show a composition bias toward low complexity; that stretch reads TSSSERTQSDTSS. Polar residues predominate over residues 312-325; the sequence is GHPSQGTNLASSEQ. One can recognise an LTD domain in the interval 362-481; that stretch reads PYTRPQLNPF…QVLSEHQATP (120 aa). The tract at residues 504 to 563 is disordered; sequence SESEPDVHPGEQQCRPSSPQKGRAKDAGARRKKPGPGVRQHRHSSTSGLRASRTLHPTET. The segment covering 533–547 has biased composition (basic residues); the sequence is RRKKPGPGVRQHRHS.

The protein is Lamin tail domain-containing protein 2 (Lmntd2) of Mus musculus (Mouse).